Consider the following 348-residue polypeptide: Cyclin-dependent kinase inhibitor 1C (348 aa).

At R109 the chain carries Omega-N-methylarginine. The disordered stretch occupies residues 115–348; sequence VAVIPRSGPP…VEQTPRKRLR (234 aa). Composition is skewed to acidic residues over residues 207–220 and 227–274; these read QGEE…DELG and QGEE…QDEN. Residues 275-284 show a composition bias toward basic and acidic residues; the sequence is QEQRGQELKD. The Nuclear localization signal motif lies at 309 to 312; that stretch reads KRKR.

It belongs to the CDI family. In terms of assembly, interacts with PCNA. As to expression, expressed in the heart, brain, lung, skeletal muscle, kidney, pancreas and testis. High levels are seen in the placenta while low levels are seen in the liver.

The protein resides in the nucleus. Potent tight-binding inhibitor of several G1 cyclin/CDK complexes (cyclin E-CDK2, cyclin D2-CDK4, and cyclin A-CDK2) and, to lesser extent, of the mitotic cyclin B-CDC2. Negative regulator of cell proliferation. May play a role in maintenance of the non-proliferative state throughout life. This is Cyclin-dependent kinase inhibitor 1C (Cdkn1c) from Mus musculus (Mouse).